The sequence spans 110 residues: UPF0060 membrane protein Ping_0587 (110 aa).

4 helical membrane-spanning segments follow: residues Ile-6–Leu-26, Ser-33–Leu-53, Thr-61–Glu-81, and Met-87–Pro-107.

Belongs to the UPF0060 family.

Its subcellular location is the cell inner membrane. This chain is UPF0060 membrane protein Ping_0587, found in Psychromonas ingrahamii (strain DSM 17664 / CCUG 51855 / 37).